A 370-amino-acid polypeptide reads, in one-letter code: 3-isopropylmalate dehydrogenase (370 aa).

77 to 90 (GPKWDSVPYEVRPE) contributes to the NAD(+) binding site. 4 residues coordinate substrate: arginine 97, arginine 107, arginine 135, and aspartate 226. Positions 226, 250, and 254 each coordinate Mg(2+). 290–302 (GSAPDIAGKGIAN) is a binding site for NAD(+).

It belongs to the isocitrate and isopropylmalate dehydrogenases family. LeuB type 1 subfamily. Homodimer. Requires Mg(2+) as cofactor. It depends on Mn(2+) as a cofactor.

It is found in the cytoplasm. It catalyses the reaction (2R,3S)-3-isopropylmalate + NAD(+) = 4-methyl-2-oxopentanoate + CO2 + NADH. Its pathway is amino-acid biosynthesis; L-leucine biosynthesis; L-leucine from 3-methyl-2-oxobutanoate: step 3/4. In terms of biological role, catalyzes the oxidation of 3-carboxy-2-hydroxy-4-methylpentanoate (3-isopropylmalate) to 3-carboxy-4-methyl-2-oxopentanoate. The product decarboxylates to 4-methyl-2 oxopentanoate. This is 3-isopropylmalate dehydrogenase from Brucella abortus (strain 2308).